The chain runs to 519 residues: Laccase-2 (519 aa).

Residues 1-20 (MGLQRFSFFVTLALVARSLA) form the signal peptide. 2 consecutive Plastocyanin-like domains span residues 22–147 (IGPV…FVVY) and 159–301 (VDNE…ILRY). Asn-74 carries an N-linked (GlcNAc...) asparagine glycan. 4 residues coordinate Cu cation: His-84, His-86, His-129, and His-131. Cystine bridges form between Cys-105–Cys-508 and Cys-137–Cys-225. N-linked (GlcNAc...) asparagine glycans are attached at residues Asn-161, Asn-228, Asn-237, Asn-271, Asn-353, and Asn-361. Residues 368–490 (TVPVLLQILS…AGFAIVFAED (123 aa)) form the Plastocyanin-like 3 domain. The Cu cation site is built by His-415, His-418, and His-420. Residue Asn-456 is glycosylated (N-linked (GlcNAc...) asparagine). Cu cation is bound by residues His-472, Cys-473, His-474, and His-478.

It belongs to the multicopper oxidase family. Cu cation is required as a cofactor.

The protein localises to the secreted. The catalysed reaction is 4 hydroquinone + O2 = 4 benzosemiquinone + 2 H2O. Lignin degradation and detoxification of lignin-derived products. This Trametes versicolor (White-rot fungus) protein is Laccase-2 (LCC2).